The primary structure comprises 1274 residues: Myosin-binding protein C, cardiac-type (1274 aa).

Met1 carries the post-translational modification N-acetylmethionine. Residue Ser47 is modified to Phosphoserine. Low complexity predominate over residues 107 to 141; the sequence is APAPAEATGAPGEAPAPAAELGESAPSPKGSSSAA. Residues 107-153 are disordered; sequence APAPAEATGAPGEAPAPAAELGESAPSPKGSSSAALNGPTPGAPDDP. In terms of domain architecture, Ig-like C2-type 1 spans 153–256; the sequence is PIGLFVMRPQ…FDCSNFNLTV (104 aa). Gln208, His210, Glu223, and His225 together coordinate Zn(2+). Phosphoserine; by PKA and PKC is present on residues Ser275, Ser284, and Ser304. Phosphoserine occurs at positions 311 and 427. Ig-like C2-type domains lie at 362–452, 453–543, 544–633, and 645–771; these read STAF…VKEP, PVLI…VQEK, KLEV…HFME, and PKIH…VIDV. A disulfide bond links Cys436 and Cys443. A Phosphoserine modification is found at Ser550. Residue Thr607 is modified to Phosphothreonine. Fibronectin type-III domains are found at residues 774 to 870 and 872 to 967; these read APAA…IGPP and EPTH…VQEI. Positions 971–1065 constitute an Ig-like C2-type 6 domain; that stretch reads PRLQLPRHLR…ATLVLQVVDK (95 aa). A Fibronectin type-III 3 domain is found at 1068–1163; sequence PPQDLRVTDA…TKEPVFIPRP (96 aa). Residues 1181–1274 enclose the Ig-like C2-type 7 domain; the sequence is PSFTQPLVNR…ECRLEVRVPQ (94 aa). Arg1241 carries the post-translational modification Omega-N-methylarginine.

Belongs to the immunoglobulin superfamily. MyBP family. Post-translationally, substrate for phosphorylation by PKA and PKC. Reversible phosphorylation appears to modulate contraction. Polyubiquitinated.

Functionally, thick filament-associated protein located in the crossbridge region of vertebrate striated muscle a bands. In vitro it binds MHC, F-actin and native thin filaments, and modifies the activity of actin-activated myosin ATPase. It may modulate muscle contraction or may play a more structural role. The sequence is that of Myosin-binding protein C, cardiac-type (MYBPC3) from Homo sapiens (Human).